A 159-amino-acid polypeptide reads, in one-letter code: Ribosome maturation factor RimM (159 aa).

Residues 86–159 enclose the PRC barrel domain; sequence SDAFHLPKLI…IHIETIEGLI (74 aa).

Belongs to the RimM family. Binds ribosomal protein uS19.

The protein resides in the cytoplasm. An accessory protein needed during the final step in the assembly of 30S ribosomal subunit, possibly for assembly of the head region. Essential for efficient processing of 16S rRNA. May be needed both before and after RbfA during the maturation of 16S rRNA. It has affinity for free ribosomal 30S subunits but not for 70S ribosomes. In Acholeplasma laidlawii (strain PG-8A), this protein is Ribosome maturation factor RimM.